The chain runs to 1015 residues: Fibronectin-binding protein A (1015 aa).

An N-terminal signal peptide occupies residues 1-36 (MKNNLRYGIRKHKLGAASVFLGTMIVVGMGQDKEAA). Positions 7–18 (YGIRKHKLGAAS) match the YSIRK-G/S signaling motif motif. The tract at residues 37-512 (ASEQKTTTVE…SNKADGNGKN (476 aa)) is ligand-binding A region. Polar residues predominate over residues 75–92 (SYSATATEQPSNATQVTT). Residues 75 to 199 (SYSATATEQP…KVETGTDVTS (125 aa)) form a disordered region. A compositionally biased stretch (basic and acidic residues) spans 112–126 (TVKEEVVKEEAKPQV). The span at 129–139 (TTQSQDNSGDQ) shows a compositional bias: polar residues. Residues 179 to 193 (DVVEAKEASDEKVET) are compositionally biased toward basic and acidic residues. Positions 194 to 512 (GTDVTSKVTV…SNKADGNGKN (319 aa)) are fibrinogen/elastin/tropoelastin-binding. Residues 513 to 873 (GQIIQNNDFE…EGQQTIEEDT (361 aa)) form a fibronectin-binding region. A B-1 repeat occupies 546–575 (ENQDNTPLDIDYHTAIDGEGGYVDGYIETI). The segment at 546–605 (ENQDNTPLDIDYHTAIDGEGGYVDGYIETIEETDSSAIDIDYHTAVDSEAGHVGGYTESS) is 2 X approximate tandem repeats. The stretch at 576-605 (EETDSSAIDIDYHTAVDSEAGHVGGYTESS) is one B-2 repeat. Disordered regions lie at residues 596-623 (GHVGGYTESSEESNPIDFEESTHENSKH), 741-815 (LGYE…IDFD), 828-953 (EIIE…GKVV), and 966-992 (VAPTKKAQSKKSELPETGGEESTNKGM). A D-1 repeat occupies 746-783 (GQNSGNQSFEEDTEEDKPKYEQGGNIVDIDFDSVPQIQ). The 4 X approximate tandem repeats stretch occupies residues 746-875 (GQNSGNQSFE…QQTIEEDTTP (130 aa)). The span at 780–791 (PQIQGQNNGNQS) shows a compositional bias: polar residues. Residues 784-821 (GQNNGNQSFEEDTEKDKPKYEQGGNIIDIDFDSVPQIH) form a D-2 repeat. A D-3 repeat occupies 822 to 860 (GFNKHTEIIEEDTNKDKPNYQFGGHNSVDFEEDTLPKVS). The segment covering 828–839 (EIIEEDTNKDKP) has biased composition (basic and acidic residues). Residues 861-875 (GQNEGQQTIEEDTTP) form a D-4; truncated repeat. The segment covering 875-935 (PPTPPTPEVP…PAEPGKPVPP (61 aa)) has biased composition (pro residues). WR repeat units follow at residues 876-889 (PTPPTPEVPSEPET), 890-903 (PTPPTPEVPSEPET), 904-917 (PTPPTPEVPSEPET), 918-931 (PTPPTPEVPAEPGK), and 932-945 (PVPPAKEEPKKPSK). The interval 876 to 945 (PTPPTPEVPS…AKEEPKKPSK (70 aa)) is 5 X tandem repeats, Pro-rich (WR). The LPXTG sorting signal motif lies at 979-983 (LPETG). Thr-982 is modified (pentaglycyl murein peptidoglycan amidated threonine). The propeptide at 983–1015 (GGEESTNKGMLFGGLFSILGLALLRRNKKNNKA) is removed by sortase.

The protein resides in the secreted. It localises to the cell wall. In terms of biological role, promotes bacterial attachment to multiple substrates, such as fibronectin (Fn), fibrinogen (Fg), elastin peptides and tropoelastin. This confers to S.aureus the ability to invade endothelial cells. Promotes adherence to and aggregation of activated platelets. The protein is Fibronectin-binding protein A (fnbA) of Staphylococcus aureus (strain MSSA476).